The primary structure comprises 132 residues: ATP synthase epsilon chain (132 aa).

The protein belongs to the ATPase epsilon chain family. F-type ATPases have 2 components, CF(1) - the catalytic core - and CF(0) - the membrane proton channel. CF(1) has five subunits: alpha(3), beta(3), gamma(1), delta(1), epsilon(1). CF(0) has four main subunits: a, b, b' and c.

The protein resides in the cellular chromatophore membrane. Functionally, produces ATP from ADP in the presence of a proton gradient across the membrane. This chain is ATP synthase epsilon chain (atpC), found in Rhodobacter capsulatus (Rhodopseudomonas capsulata).